Reading from the N-terminus, the 819-residue chain is MSGTSKESLGHGGLPGLGKTCLTTMDTKLNMLNEKVDQLLHFQEDVTEKLQSMCRDMGHLERGLHRLEASRAPGPGGADGVPHIDTQAGWPEVLELVRAMQQDAAQHGARLEALFRMVAAVDRAIALVGATFQKSKVADFLMQGRVPWRRGSPGDSPEENKERVEEEGGKPKHVLSTSGVQSDAREPGEESQKADVLEGTAERLPPIRASGLGADPAQAVVSPGQGDGVPGPAQAFPGHLPLPTKVEAKAPETPSENLRTGLELAPAPGRVNVVSPSLEVAPGAGQGASSSRPDPEPLEEGTRLTPGPGPQCPGPPGLPAQARATHSGGETPPRISIHIQEMDTPGEMLMTGRGSLGPTLTTEAPAAAQPGKQGPPGTGRCLQAPGTEPGEQTPEGARELSPLQESSSPGGVKAEEEQRAGAEPGTRPSLARSDDNDHEVGALGLQQGKSPGAGNPEPEQDCAARAPVRAEAVRRMPPGAEAGSVVLDDSPAPPAPFEHRVVSVKETSISAGYEVCQHEVLGGGRFGQVHRCTEKSTGLPLAAKIIKVKSAKDREDVKNEINIMNQLSHVNLIQLYDAFESKHSCTLVMEYVDGGELFDRITDEKYHLTELDVVLFTRQICEGVHYLHQHYILHLDLKPENILCVNQTGHQIKIIDFGLARRYKPREKLKVNFGTPEFLAPEVVNYEFVSFPTDMWSVGVITYMLLSGLSPFLGETDAETMNFIVNCSWDFDADTFEGLSEEAKDFVSRLLVKEKSCRMSATQCLKHEWLNNLPAKASRSKTRLKSQLLLQKYIAQRKWKKHFYVVTAANRLRKFPTSP.

3 disordered regions span residues 146–256 (VPWR…TPSE), 273–334 (VVSP…TPPR), and 347–462 (EMLM…EQDC). Phosphoserine is present on Ser-152. Composition is skewed to basic and acidic residues over residues 158–170 (EENKERVEEEGGK) and 183–196 (DAREPGEESQKADV). Over residues 307-318 (GPGPQCPGPPGL) the composition is skewed to pro residues. A phosphoserine mark is found at Ser-355, Ser-401, and Ser-408. A Protein kinase domain is found at 515-770 (VCQHEVLGGG…ATQCLKHEWL (256 aa)). ATP is bound by residues 521-529 (LGGGRFGQV) and Lys-544. Asp-636 serves as the catalytic Proton acceptor.

It belongs to the protein kinase superfamily. CAMK Ser/Thr protein kinase family. It depends on Mg(2+) as a cofactor. Phosphorylated on serine residues. In terms of tissue distribution, restricted to heart.

Its subcellular location is the cytoplasm. It carries out the reaction L-seryl-[myosin light chain] + ATP = O-phospho-L-seryl-[myosin light chain] + ADP + H(+). The catalysed reaction is L-threonyl-[myosin light chain] + ATP = O-phospho-L-threonyl-[myosin light chain] + ADP + H(+). In terms of biological role, kinase that phosphorylates MYL2 in vitro. Promotes sarcomere formation in cardiomyocytes and increases cardiomyocyte contractility. The sequence is that of Myosin light chain kinase 3 (MYLK3) from Homo sapiens (Human).